The chain runs to 222 residues: MKKVVAIDGPSGAGKSTVSKEIAKALGFQYLDTGALYRAVAYYFSIKFNYIDDFSLLTEQEIEEELKNIKIHYKNGRVFLSGEDVSDFIRDPKIGEITSQLSTQKVVRDFLMPLQRSFAEKVDIVAEGRDMTTVVFPDAWKKFYLDASPQVRAKRRFEQLIQSGKKISFEEALRDVIERDKRDCSRENAPLRLSKDAFYIDTSELTLQEVISIVLKKVAEDA.

9 to 17 contacts ATP; that stretch reads GPSGAGKST.

This sequence belongs to the cytidylate kinase family. Type 1 subfamily.

Its subcellular location is the cytoplasm. The catalysed reaction is CMP + ATP = CDP + ADP. The enzyme catalyses dCMP + ATP = dCDP + ADP. The chain is Cytidylate kinase from Thermodesulfovibrio yellowstonii (strain ATCC 51303 / DSM 11347 / YP87).